Reading from the N-terminus, the 372-residue chain is Secreted beta-glucosidase SIM1 (372 aa).

The N-terminal stretch at 1–15 (MKYLTLLTVLSTALA) is a signal peptide. Residues 51–85 (VTENASSGASSGETAETIQTRSSSDVSSSSDSNPV) form a disordered region. Residues 52 to 85 (TENASSGASSGETAETIQTRSSSDVSSSSDSNPV) show a composition bias toward low complexity. N-linked (GlcNAc...) asparagine glycans are attached at residues Asn54 and Asn351.

This sequence belongs to the SUN family.

The protein resides in the secreted. Its subcellular location is the cell wall. Functionally, cell surface beta-glucosidase involved in cell wall maintenance and cytokinesis. Plays a role redundant to SUN41. The chain is Secreted beta-glucosidase SIM1 (SIM1) from Candida albicans (strain SC5314 / ATCC MYA-2876) (Yeast).